A 131-amino-acid polypeptide reads, in one-letter code: Type 3 secretion system pilotin (131 aa).

Positions 1–15 (MSRIIALIISFLLVG) are cleaved as a signal peptide. Cysteine 16 carries N-palmitoyl cysteine lipidation. Residue cysteine 16 is the site of S-diacylglycerol cysteine attachment.

It belongs to the ExsB/YscW family. Interacts with YscC/SctC.

Its subcellular location is the cell outer membrane. In terms of biological role, involved in the synthesis of the type III secretion system (T3SS), also called injectisome, which is used to inject bacterial effector proteins into eukaryotic host cells. Pilot protein that is required for the proper localization of the secretin YscC/SctC in the outer membrane. Also required for efficient oligomerization of YscC/SctC and stabilization of the oligomers. The chain is Type 3 secretion system pilotin from Yersinia enterocolitica.